The primary structure comprises 400 residues: PHD finger protein 24 (400 aa).

Gly-2 is lipidated: N-myristoyl glycine. Residues Arg-29–Gly-38 show a composition bias toward basic and acidic residues. The disordered stretch occupies residues Arg-29 to Ala-65. The residue at position 36 (Arg-36) is an Omega-N-methylarginine. Phosphoserine is present on Ser-43. Thr-47 carries the post-translational modification Phosphothreonine. Ser-51 is subject to Phosphoserine. The PHD-type zinc finger occupies Asn-129–Asn-190. Arg-307 is subject to Omega-N-methylarginine.

In Mus musculus (Mouse), this protein is PHD finger protein 24.